A 644-amino-acid chain; its full sequence is Threonine--tRNA ligase (644 aa).

A TGS domain is found at 3-64 (EMIRITFPDG…QEDGSISIIT (62 aa)). The segment at 245–542 (DHRKLGKELE…LIEEYKGAFP (298 aa)) is catalytic. Residues cysteine 338, histidine 389, and histidine 519 each coordinate Zn(2+).

This sequence belongs to the class-II aminoacyl-tRNA synthetase family. In terms of assembly, homodimer. Zn(2+) serves as cofactor.

It localises to the cytoplasm. It catalyses the reaction tRNA(Thr) + L-threonine + ATP = L-threonyl-tRNA(Thr) + AMP + diphosphate + H(+). Catalyzes the attachment of threonine to tRNA(Thr) in a two-step reaction: L-threonine is first activated by ATP to form Thr-AMP and then transferred to the acceptor end of tRNA(Thr). Also edits incorrectly charged L-seryl-tRNA(Thr). The protein is Threonine--tRNA ligase of Geobacillus sp. (strain WCH70).